We begin with the raw amino-acid sequence, 305 residues long: UDP-3-O-acyl-N-acetylglucosamine deacetylase (305 aa).

The Zn(2+) site is built by His-79, His-238, and Asp-242. Residue His-265 is the Proton donor of the active site.

Belongs to the LpxC family. Zn(2+) is required as a cofactor.

The catalysed reaction is a UDP-3-O-[(3R)-3-hydroxyacyl]-N-acetyl-alpha-D-glucosamine + H2O = a UDP-3-O-[(3R)-3-hydroxyacyl]-alpha-D-glucosamine + acetate. Its pathway is glycolipid biosynthesis; lipid IV(A) biosynthesis; lipid IV(A) from (3R)-3-hydroxytetradecanoyl-[acyl-carrier-protein] and UDP-N-acetyl-alpha-D-glucosamine: step 2/6. Its function is as follows. Catalyzes the hydrolysis of UDP-3-O-myristoyl-N-acetylglucosamine to form UDP-3-O-myristoylglucosamine and acetate, the committed step in lipid A biosynthesis. This is UDP-3-O-acyl-N-acetylglucosamine deacetylase from Klebsiella pneumoniae subsp. pneumoniae (strain ATCC 700721 / MGH 78578).